The sequence spans 580 residues: TRAF-type zinc finger domain-containing protein 1 (580 aa).

Residue A2 is modified to N-acetylalanine. The segment at 27–103 (IHEIHCQRNI…DLELSVLKLK (77 aa)) adopts a TRAF-type zinc-finger fold. Position 190 is a phosphoserine (S190). The span at 197-209 (TTNQRSMTAQFPI) shows a compositional bias: polar residues. The segment at 197-236 (TTNQRSMTAQFPIQNNLLEEQERQERNRSRQTPKERGEDS) is disordered. The span at 216-235 (EQERQERNRSRQTPKERGED) shows a compositional bias: basic and acidic residues. Phosphoserine is present on residues S326, S414, and S429. The interval 392–580 (PATANNHVSE…GAGDAEEEEE (189 aa)) is disordered. The segment covering 409–419 (QPRETSPELPK) has biased composition (basic and acidic residues). A compositionally biased stretch (low complexity) spans 453–463 (PPNNTTAPPNR). Residue S469 is modified to Phosphoserine.

As to quaternary structure, interacts with MAVS, TICAM1, TRAF1, TRAF2, TRAF3 and TRAF6.

In terms of biological role, negative feedback regulator that controls excessive innate immune responses. Regulates both Toll-like receptor 4 (TLR4) and DDX58/RIG1-like helicases (RLH) pathways. May inhibit the LTR pathway by direct interaction with TRAF6 and attenuation of NF-kappa-B activation. May negatively regulate the RLH pathway downstream from MAVS and upstream of NF-kappa-B and IRF3. In Bos taurus (Bovine), this protein is TRAF-type zinc finger domain-containing protein 1 (TRAFD1).